The sequence spans 109 residues: MSLTADPPACTVPAAGGSSTHKLVNGGAEKIIFKIKSSNNNEYRIAPVFGFVDPAGSKDVVITRTAGAPKEDKLVIHFAPAPADATDAQAAFAAVTPAGTVTIPMSATA.

One can recognise an MSP domain in the interval Ser-2–Ala-109.

In terms of tissue distribution, expressed at higher level in testis.

The chain is Sperm-specific class P protein 9/11 (ssp-9) from Caenorhabditis elegans.